The chain runs to 107 residues: MSVEAVVKQVDGDALEAAIKGDKLLVCDFFATWCGPCKSLAPKLDAMAKENEKVIFVKLDVDECQDVAEKYRVTAMPTLIVFKNGCEIGHVVGANEAGIRELIQANA.

In terms of domain architecture, Thioredoxin spans 2 to 107 (SVEAVVKQVD…GIRELIQANA (106 aa)). Catalysis depends on nucleophile residues Cys-34 and Cys-37. Cysteines 34 and 37 form a disulfide.

Belongs to the thioredoxin family.

In terms of biological role, participates in various redox reactions through the reversible oxidation of its active center dithiol to a disulfide and catalyzes dithiol-disulfide exchange reactions. The polypeptide is Thioredoxin (TRX) (Echinococcus granulosus (Hydatid tapeworm)).